We begin with the raw amino-acid sequence, 159 residues long: MEKIPSFQLDHIRLKRGIYVSRKDYIGGEVVTTFDIRMKEPNREPVLGAPELHTIEHLAATYLRNHPLYKDRIVFWGPMGCLTGNYFLMRGDYVSKDILPLMQETFRFIRDFEGEVPGTEPRDCGNCLLHNLPMAKYEAEKYLREVLDVATEENLNYPD.

His53, His57, and Cys124 together coordinate Fe cation.

This sequence belongs to the LuxS family. As to quaternary structure, homodimer. It depends on Fe cation as a cofactor.

It carries out the reaction S-(5-deoxy-D-ribos-5-yl)-L-homocysteine = (S)-4,5-dihydroxypentane-2,3-dione + L-homocysteine. Functionally, involved in the synthesis of autoinducer 2 (AI-2) which is secreted by bacteria and is used to communicate both the cell density and the metabolic potential of the environment. The regulation of gene expression in response to changes in cell density is called quorum sensing. Catalyzes the transformation of S-ribosylhomocysteine (RHC) to homocysteine (HC) and 4,5-dihydroxy-2,3-pentadione (DPD). This chain is S-ribosylhomocysteine lyase, found in Porphyromonas gingivalis (strain ATCC BAA-308 / W83).